We begin with the raw amino-acid sequence, 338 residues long: uncharacterized protein (338 aa).

This is an uncharacterized protein from Thermoproteus tenax (TTV1).